We begin with the raw amino-acid sequence, 277 residues long: MKKPVDFFAMKENGEKITMITAYDYPSAKNVEQAEADMILVGDSLGMVVLGYDSTVPVTMNDMIHHTKAVKRGAPNTFVVTDMPFMTYHGSVDETIQNARKIIQESGAHAVKLEGAGEVVNKIARLTEAGAPVVAHLGLTPQSVGLTGSYKVRAKSVQEAQELIDNALAVEAAGAIAIVLEAIPRQLAEKVTKALTIPTIGIGAGLETDGQVLVYHDIIGYGINRRAKFVKAYADIDETIEPALKNYVNDVKELAFPEVKHSFTMAEEDLKGLYGRE.

Mg(2+) contacts are provided by Asp-43 and Asp-82. 3-methyl-2-oxobutanoate-binding positions include 43 to 44 (DS), Asp-82, and Lys-112. Residue Glu-114 participates in Mg(2+) binding. Glu-181 functions as the Proton acceptor in the catalytic mechanism.

Belongs to the PanB family. As to quaternary structure, homodecamer; pentamer of dimers. Mg(2+) serves as cofactor.

It localises to the cytoplasm. It carries out the reaction 3-methyl-2-oxobutanoate + (6R)-5,10-methylene-5,6,7,8-tetrahydrofolate + H2O = 2-dehydropantoate + (6S)-5,6,7,8-tetrahydrofolate. Its pathway is cofactor biosynthesis; (R)-pantothenate biosynthesis; (R)-pantoate from 3-methyl-2-oxobutanoate: step 1/2. In terms of biological role, catalyzes the reversible reaction in which hydroxymethyl group from 5,10-methylenetetrahydrofolate is transferred onto alpha-ketoisovalerate to form ketopantoate. This is 3-methyl-2-oxobutanoate hydroxymethyltransferase from Listeria innocua serovar 6a (strain ATCC BAA-680 / CLIP 11262).